We begin with the raw amino-acid sequence, 459 residues long: Cysteine--tRNA ligase (459 aa).

Cys-29 serves as a coordination point for Zn(2+). A 'HIGH' region motif is present at residues 31–41; sequence PTVYDRAHIGN. Residues Cys-209, His-234, and Glu-238 each coordinate Zn(2+). Positions 266–270 match the 'KMSKS' region motif; it reads KMSKS. Lys-269 is a binding site for ATP.

Belongs to the class-I aminoacyl-tRNA synthetase family. In terms of assembly, monomer. Requires Zn(2+) as cofactor.

It localises to the cytoplasm. The enzyme catalyses tRNA(Cys) + L-cysteine + ATP = L-cysteinyl-tRNA(Cys) + AMP + diphosphate. The polypeptide is Cysteine--tRNA ligase (Paramagnetospirillum magneticum (strain ATCC 700264 / AMB-1) (Magnetospirillum magneticum)).